The primary structure comprises 505 residues: Protein DETOXIFICATION 50 (505 aa).

12 consecutive transmembrane segments (helical) span residues 46 to 66 (LVLT…FLGG), 78 to 98 (AAAF…MGVE), 121 to 141 (IILL…MEKI), 155 to 175 (AHIF…LHPL), 194 to 214 (IASF…GLGI), 219 to 239 (LSGV…ICFF), 275 to 295 (ISVC…GFLL), 305 to 325 (GILI…SLGV), 344 to 364 (AAIV…AFTV), 380 to 400 (IMKL…GNCP), 424 to 444 (AFYA…GFGF), and 446 to 466 (GLWL…MAAT).

The protein belongs to the multi antimicrobial extrusion (MATE) (TC 2.A.66.1) family. In terms of tissue distribution, preferentially expressed in rosette leaves. Detected mainly in the vascular tissues and guard cells. Mostly detected at reproductive stages in young anthers, in mature pollens and during pollen germination on the pistil. Also expressed in developing seeds.

It localises to the cell membrane. The protein localises to the late endosome membrane. Functionally, functions as a multidrug and toxin extrusion transporter in the export of abscisic acid (ABA) in guard cells. Plays a role in ABA-mediated growth inhibition and responses to drought conditions. May act as a negative regulator of hypocotyl cell elongation in the light. In Arabidopsis thaliana (Mouse-ear cress), this protein is Protein DETOXIFICATION 50.